The primary structure comprises 325 residues: Probable 2-ketogluconate reductase (325 aa).

NAD(+) contacts are provided by residues 158–159 (RI), Thr211, 238–240 (ISR), and Asp264. The active site involves Arg240. Glu269 is an active-site residue. Residue His288 is the Proton donor of the active site. 288-291 (HIGS) is a binding site for NAD(+).

The protein belongs to the D-isomer specific 2-hydroxyacid dehydrogenase family.

The enzyme catalyses D-gluconate + NADP(+) = 2-dehydro-D-gluconate + NADPH + H(+). The protein is Probable 2-ketogluconate reductase (yvcT) of Bacillus subtilis (strain 168).